Reading from the N-terminus, the 179-residue chain is MARLKEVYRKEIAPKLKEELQLKNVMEVPRITKITLNMGIGEAIGDKKIIDNAVADLEKITGQKVVVTHARKSIAGFKVREGWPIGVKVTLRSDRMYEFLDRLLSISLPRVRDFRGLNAKSFDGRGNYSMGVKEQIIFPEIDYDKIDALRGLDITLTTTARTDDEGRALLRAFNFPFRN.

This sequence belongs to the universal ribosomal protein uL5 family. As to quaternary structure, part of the 50S ribosomal subunit; part of the 5S rRNA/L5/L18/L25 subcomplex. Contacts the 5S rRNA and the P site tRNA. Forms a bridge to the 30S subunit in the 70S ribosome.

This is one of the proteins that bind and probably mediate the attachment of the 5S RNA into the large ribosomal subunit, where it forms part of the central protuberance. In the 70S ribosome it contacts protein S13 of the 30S subunit (bridge B1b), connecting the 2 subunits; this bridge is implicated in subunit movement. Contacts the P site tRNA; the 5S rRNA and some of its associated proteins might help stabilize positioning of ribosome-bound tRNAs. This Stutzerimonas stutzeri (strain A1501) (Pseudomonas stutzeri) protein is Large ribosomal subunit protein uL5.